Here is a 209-residue protein sequence, read N- to C-terminus: Large ribosomal subunit protein uL3 (209 aa).

The residue at position 150 (Gln150) is an N5-methylglutamine.

Belongs to the universal ribosomal protein uL3 family. Part of the 50S ribosomal subunit. Forms a cluster with proteins L14 and L19. Methylated by PrmB.

One of the primary rRNA binding proteins, it binds directly near the 3'-end of the 23S rRNA, where it nucleates assembly of the 50S subunit. This is Large ribosomal subunit protein uL3 from Salmonella arizonae (strain ATCC BAA-731 / CDC346-86 / RSK2980).